Consider the following 39-residue polypeptide: Photosystem II reaction center protein Psb30 (39 aa).

The chain crosses the membrane as a helical span at residues 12–32 (IFQLTFVGLIVIAGPIVIAVL).

It belongs to the Psb30/Ycf12 family. In terms of assembly, PSII is composed of 1 copy each of membrane proteins PsbA, PsbB, PsbC, PsbD, PsbE, PsbF, PsbH, PsbI, PsbJ, PsbK, PsbL, PsbM, PsbT, PsbX, PsbY, PsbZ, Psb30/Ycf12, peripheral proteins PsbO, CyanoQ (PsbQ), PsbU, PsbV and a large number of cofactors. It forms dimeric complexes.

Its subcellular location is the cellular thylakoid membrane. Functionally, a core subunit of photosystem II (PSII), probably helps stabilize the reaction center. The chain is Photosystem II reaction center protein Psb30 from Crocosphaera subtropica (strain ATCC 51142 / BH68) (Cyanothece sp. (strain ATCC 51142)).